We begin with the raw amino-acid sequence, 428 residues long: MSYIGLQQDSGEYKIQKIHAREILDSRGNPTVEVDVFTPKGFGRAGVPSGASTGTNEALELRDADPNRYGGKGVLTAVKNVNTIIQKELLGLDVRNQREIDELMIELDETDNKSNLGANAILGVSMAVARAAADSLNVPLYRYLGGSNAFTLPVPTMNVLNGGKHAGNDLAIQEFMIQPKGAETFYEALQIGAEIYHVLGKILEKKYGRSSTNVGYEGGYAPKMSESTEALDALAQAIEEAGYTDTEVTIGLDAAASEFYEDEAYAIDGKKLSAPELMDYYVELVNSYPILSIEDPFYEEAFEDFEALTNELWDTIIVGDDLFVTNIERLSKGVDMGAANALLLKVNQIGTISEAFDAANMASRNGYTVIVSHRSAETEDTTIADISVAIGAEMIKTGAPARGERTAKYNQLLRIEEDLGEVAHYVQL.

(2R)-2-phosphoglycerate is bound at residue glutamine 173. Residue glutamate 217 is the Proton donor of the active site. Mg(2+) contacts are provided by aspartate 253, glutamate 294, and aspartate 320. Residues lysine 345, arginine 374, serine 375, and lysine 396 each contribute to the (2R)-2-phosphoglycerate site. Lysine 345 acts as the Proton acceptor in catalysis.

The protein belongs to the enolase family. It depends on Mg(2+) as a cofactor.

It localises to the cytoplasm. The protein localises to the secreted. The protein resides in the cell surface. The enzyme catalyses (2R)-2-phosphoglycerate = phosphoenolpyruvate + H2O. It functions in the pathway carbohydrate degradation; glycolysis; pyruvate from D-glyceraldehyde 3-phosphate: step 4/5. In terms of biological role, catalyzes the reversible conversion of 2-phosphoglycerate (2-PG) into phosphoenolpyruvate (PEP). It is essential for the degradation of carbohydrates via glycolysis. The protein is Enolase of Methanosarcina barkeri (strain Fusaro / DSM 804).